The following is a 390-amino-acid chain: Chalcone synthase (390 aa).

The active site involves cysteine 164.

It belongs to the thiolase-like superfamily. Chalcone/stilbene synthases family.

It catalyses the reaction (E)-4-coumaroyl-CoA + 3 malonyl-CoA + 3 H(+) = 2',4,4',6'-tetrahydroxychalcone + 3 CO2 + 4 CoA. It functions in the pathway secondary metabolite biosynthesis; flavonoid biosynthesis. Its function is as follows. The primary product of this enzyme is 4,2',4',6'-tetrahydroxychalcone (also termed naringenin-chalcone or chalcone) which undergoes enzyme-catalyzed or spontaneous isomerization into naringenin. The chain is Chalcone synthase from Hypericum androsaemum (Tutsan).